The sequence spans 380 residues: Tryptophan--tRNA ligase (380 aa).

The short motif at 81-89 (PSLGMHIGH) is the 'HIGH' region element. The short motif at 253-257 (KMSSS) is the 'KMSKS' region element.

The protein belongs to the class-I aminoacyl-tRNA synthetase family.

The protein resides in the cytoplasm. The catalysed reaction is tRNA(Trp) + L-tryptophan + ATP = L-tryptophyl-tRNA(Trp) + AMP + diphosphate + H(+). The chain is Tryptophan--tRNA ligase from Saccharolobus solfataricus (strain ATCC 35092 / DSM 1617 / JCM 11322 / P2) (Sulfolobus solfataricus).